A 304-amino-acid chain; its full sequence is Coenzyme PQQ synthesis protein B (304 aa).

Belongs to the PqqB family.

Its pathway is cofactor biosynthesis; pyrroloquinoline quinone biosynthesis. Functionally, may be involved in the transport of PQQ or its precursor to the periplasm. This is Coenzyme PQQ synthesis protein B from Ectopseudomonas mendocina (strain ymp) (Pseudomonas mendocina).